The chain runs to 422 residues: Serine--tRNA ligase (422 aa).

231–233 provides a ligand contact to L-serine; the sequence is TSE. 262-264 contacts ATP; the sequence is RQE. Residue E285 coordinates L-serine. 349-352 provides a ligand contact to ATP; that stretch reads EISS. S384 lines the L-serine pocket.

Belongs to the class-II aminoacyl-tRNA synthetase family. Type-1 seryl-tRNA synthetase subfamily. In terms of assembly, homodimer. The tRNA molecule binds across the dimer.

It localises to the cytoplasm. The catalysed reaction is tRNA(Ser) + L-serine + ATP = L-seryl-tRNA(Ser) + AMP + diphosphate + H(+). It carries out the reaction tRNA(Sec) + L-serine + ATP = L-seryl-tRNA(Sec) + AMP + diphosphate + H(+). The protein operates within aminoacyl-tRNA biosynthesis; selenocysteinyl-tRNA(Sec) biosynthesis; L-seryl-tRNA(Sec) from L-serine and tRNA(Sec): step 1/1. In terms of biological role, catalyzes the attachment of serine to tRNA(Ser). Is also able to aminoacylate tRNA(Sec) with serine, to form the misacylated tRNA L-seryl-tRNA(Sec), which will be further converted into selenocysteinyl-tRNA(Sec). The chain is Serine--tRNA ligase from Mycoplasma capricolum subsp. capricolum (strain California kid / ATCC 27343 / NCTC 10154).